Consider the following 310-residue polypeptide: p-hydroxybenzoic acid efflux pump subunit AaeA (310 aa).

Residues 12-32 (AITVVLVILAFIAIFNAWVYY) form a helical membrane-spanning segment.

The protein belongs to the membrane fusion protein (MFP) (TC 8.A.1) family.

The protein resides in the cell inner membrane. Forms an efflux pump with AaeB. The sequence is that of p-hydroxybenzoic acid efflux pump subunit AaeA from Escherichia coli O127:H6 (strain E2348/69 / EPEC).